The primary structure comprises 521 residues: MSFSRSEAAPAAPLPDLAATLAAPRDDAFQQLGAAFVTRLPAAPLPAPYVVGFSDDAARMLGLEPALRDAPGFAELFCGNPTRDWPQASLPYASVYSGHQFGVWAGQLGDGRALTIGELAHDGRRYELQLKGAGRTPYSRMGDGRAVLRSSIREFLCSEAMHHLGIPTTRALAVIGSDQPVVREEIETSAVVTRVAQSFVRFGHFEHFFANDRPEQLRALADHVIERFYPACRDADDPYLALLAEATRRTAELVAQWQAVGFCHGVMNTDNMSILGLTIDYGPFGFIDAFDAKHVCNHSDTQGRYAYRMQPRIAHWNCFCLAQALLPLIGLHRDAPSEDARAERAVEDAHAVLGRFPEQFGPALERAMRAKLGLALEREGDAALANQLLEIMDASHADFTLTFRHLARVSKHDARGDAPVRDLFIDRDAFDRWANLYRARLSEEARDDASRAAAMNRVNPKYVLRNHLAETAIRRAKEKDFSEVERLAAVLRRPFDEQPEHDAYAALPPDWASTLEVSCSS.

Gly109, Gly111, Arg112, Lys131, Asp143, Gly144, Arg194, and Arg201 together coordinate ATP. Asp270 functions as the Proton acceptor in the catalytic mechanism. Mg(2+) contacts are provided by Asn271 and Asp280. Asp280 is an ATP binding site.

Belongs to the SELO family. It depends on Mg(2+) as a cofactor. Requires Mn(2+) as cofactor.

It carries out the reaction L-seryl-[protein] + ATP = 3-O-(5'-adenylyl)-L-seryl-[protein] + diphosphate. It catalyses the reaction L-threonyl-[protein] + ATP = 3-O-(5'-adenylyl)-L-threonyl-[protein] + diphosphate. The catalysed reaction is L-tyrosyl-[protein] + ATP = O-(5'-adenylyl)-L-tyrosyl-[protein] + diphosphate. The enzyme catalyses L-histidyl-[protein] + UTP = N(tele)-(5'-uridylyl)-L-histidyl-[protein] + diphosphate. It carries out the reaction L-seryl-[protein] + UTP = O-(5'-uridylyl)-L-seryl-[protein] + diphosphate. It catalyses the reaction L-tyrosyl-[protein] + UTP = O-(5'-uridylyl)-L-tyrosyl-[protein] + diphosphate. Nucleotidyltransferase involved in the post-translational modification of proteins. It can catalyze the addition of adenosine monophosphate (AMP) or uridine monophosphate (UMP) to a protein, resulting in modifications known as AMPylation and UMPylation. The sequence is that of Protein nucleotidyltransferase YdiU from Burkholderia pseudomallei (strain K96243).